A 123-amino-acid polypeptide reads, in one-letter code: Thioredoxin domain-containing protein 17 (123 aa).

N-acetylalanine is present on alanine 2. A Thioredoxin domain is found at 41-123; the sequence is SWCPDCVQAE…NLVEMLFSED (83 aa). Catalysis depends on nucleophile residues cysteine 43 and cysteine 46. A disulfide bridge connects residues cysteine 43 and cysteine 46.

The protein belongs to the thioredoxin family. In terms of assembly, interacts with TRXR1 and DYNLL1/DNCL1. The oxidized protein is reduced by TRXR1. As to expression, ubiquitously expressed in cell lines.

The protein resides in the cytoplasm. Its function is as follows. Disulfide reductase. May participate in various redox reactions through the reversible oxidation of its active center dithiol to a disulfide and catalyze dithiol-disulfide exchange reactions. Modulates TNF-alpha signaling and NF-kappa-B activation. Has peroxidase activity and may contribute to the elimination of cellular hydrogen peroxide. This chain is Thioredoxin domain-containing protein 17 (TXNDC17), found in Homo sapiens (Human).